Consider the following 104-residue polypeptide: NADH-quinone oxidoreductase subunit K (104 aa).

The next 3 membrane-spanning stretches (helical) occupy residues 4-24, 31-51, and 67-87; these read VPAS…LFGA, VIVL…LVAF, and LFTM…LIAL.

Belongs to the complex I subunit 4L family. NDH-1 is composed of 14 different subunits. Subunits NuoA, H, J, K, L, M, N constitute the membrane sector of the complex.

The protein resides in the cell membrane. It catalyses the reaction a quinone + NADH + 5 H(+)(in) = a quinol + NAD(+) + 4 H(+)(out). In terms of biological role, NDH-1 shuttles electrons from NADH, via FMN and iron-sulfur (Fe-S) centers, to quinones in the respiratory chain. The immediate electron acceptor for the enzyme in this species is believed to be a menaquinone. Couples the redox reaction to proton translocation (for every two electrons transferred, four hydrogen ions are translocated across the cytoplasmic membrane), and thus conserves the redox energy in a proton gradient. This is NADH-quinone oxidoreductase subunit K from Bacillus cereus (strain G9842).